Reading from the N-terminus, the 121-residue chain is Large ribosomal subunit protein bL12 (121 aa).

This sequence belongs to the bacterial ribosomal protein bL12 family. Homodimer. Part of the ribosomal stalk of the 50S ribosomal subunit. Forms a multimeric L10(L12)X complex, where L10 forms an elongated spine to which 2 to 4 L12 dimers bind in a sequential fashion. Binds GTP-bound translation factors.

Forms part of the ribosomal stalk which helps the ribosome interact with GTP-bound translation factors. Is thus essential for accurate translation. This chain is Large ribosomal subunit protein bL12, found in Leuconostoc citreum (strain KM20).